A 218-amino-acid chain; its full sequence is Guanylate kinase (218 aa).

Residues 10 to 190 form the Guanylate kinase-like domain; it reads GLLIILSSPS…TEERLKTIIT (181 aa). 17-24 contributes to the ATP binding site; it reads SPSGAGKS.

The protein belongs to the guanylate kinase family.

The protein resides in the cytoplasm. It carries out the reaction GMP + ATP = GDP + ADP. Its function is as follows. Essential for recycling GMP and indirectly, cGMP. This Jannaschia sp. (strain CCS1) protein is Guanylate kinase.